The chain runs to 418 residues: Putative ion-transport protein YfeO (418 aa).

The next 12 membrane-spanning stretches (helical) occupy residues 10 to 30 (LLLSLPAVAIGITSSLILIMV), 54 to 74 (DSPLWIIGVLTLTGIAVGLVI), 99 to 119 (ALPGLIVALILGLAGGVSLGP), 120 to 140 (EHPIITVNIALAVAIGARLLP), 149 to 169 (ILASAGTIGALFGTTVAAALI), 186 to 206 (LFAPLMAAAAGALTTGLFFHP), 223 to 243 (ILSGAIVAAIAIAAGMVAVWC), 258 to 278 (VFVLGIGGFILGILGVIGGPV), 300 to 320 (DYFLLAVIKLAALVVAAASGF), 322 to 342 (GGRIFPAVFVGVALGLMLHEH), 343 to 363 (VPAVPAAITVSCAILGIVLVV), and 371 to 391 (LFMAAVVVPNTTLLPLLCIVM).

Belongs to the chloride channel (TC 2.A.49) family.

It localises to the cell membrane. The protein is Putative ion-transport protein YfeO of Escherichia coli O127:H6 (strain E2348/69 / EPEC).